A 382-amino-acid chain; its full sequence is Alcohol dehydrogenase 4 (382 aa).

Belongs to the iron-containing alcohol dehydrogenase family. In terms of assembly, homodimer. The cofactor is Zn(2+). It depends on Fe(2+) as a cofactor.

The protein localises to the mitochondrion. The catalysed reaction is a primary alcohol + NAD(+) = an aldehyde + NADH + H(+). The enzyme catalyses a secondary alcohol + NAD(+) = a ketone + NADH + H(+). Inhibited by EDTA. Reduces acetaldehyde to ethanol during glucose fermentation. Specific for ethanol. Shows drastically reduced activity towards primary alcohols from 4 carbon atoms upward. Isomers of aliphatic alcohol, as well as secondary alcohols and glycerol are not used at all. The polypeptide is Alcohol dehydrogenase 4 (ADH4) (Saccharomyces cerevisiae (strain YJM789) (Baker's yeast)).